Reading from the N-terminus, the 563-residue chain is Arginine--tRNA ligase (563 aa).

The short motif at 121 to 131 is the 'HIGH' region element; sequence PNIAKPFSIGH.

This sequence belongs to the class-I aminoacyl-tRNA synthetase family. In terms of assembly, monomer.

The protein resides in the cytoplasm. The enzyme catalyses tRNA(Arg) + L-arginine + ATP = L-arginyl-tRNA(Arg) + AMP + diphosphate. The polypeptide is Arginine--tRNA ligase (Streptococcus pneumoniae (strain Hungary19A-6)).